The following is a 183-amino-acid chain: Adenine phosphoribosyltransferase (183 aa).

Belongs to the purine/pyrimidine phosphoribosyltransferase family. Homodimer.

It is found in the cytoplasm. The catalysed reaction is AMP + diphosphate = 5-phospho-alpha-D-ribose 1-diphosphate + adenine. It functions in the pathway purine metabolism; AMP biosynthesis via salvage pathway; AMP from adenine: step 1/1. Functionally, catalyzes a salvage reaction resulting in the formation of AMP, that is energically less costly than de novo synthesis. This chain is Adenine phosphoribosyltransferase, found in Klebsiella pneumoniae subsp. pneumoniae (strain ATCC 700721 / MGH 78578).